Here is a 493-residue protein sequence, read N- to C-terminus: MLKHGNLEYEIIIGCEIHCQLLTKTKAFCSCENRYGGIPNTRVCPCCLGLPGALPRVSKEYVEFGIKAGHALGCRINNFSKFDRKHYFYPDLVKGYQITQFYTPLCEEGEVEVNLAAQNEEPKFKKIRIERIHLEEDVGKSLHIEGSHSYIDFNRSGVPLIEIVSKPDMSTPDEAAKYMQTIREILKFIGVTDGNMEEGALRCDANVNLKIIDNGVEFRTPISEIKNMNSFKAVKDACTYEVSRQLEEYNSKDRIAFKTGFKRTMGWDEPSGQTVVQRTKTIAEDYRFMPEPDLRALELSDKFIKEVSDSVGELPEAKRLRFKKEYHLSEFDVQTLTSERELAEWFEEAAKKSSSPKKCANWILAEVLAILNETNSSLSDLKFGPEAIAELVNVIEEGKITSKQAKDVFAEMIACGKKPSAVIAEKGMEQVSDSSFIEKIVEEVFAENAEAVQDWKNGKTNVAGWLMGQVMKKSGGKANPKQAADLVNKRLTE.

Positions 473-493 (KSGGKANPKQAADLVNKRLTE) are disordered.

The protein belongs to the GatB/GatE family. GatB subfamily. Heterotrimer of A, B and C subunits.

It catalyses the reaction L-glutamyl-tRNA(Gln) + L-glutamine + ATP + H2O = L-glutaminyl-tRNA(Gln) + L-glutamate + ADP + phosphate + H(+). The catalysed reaction is L-aspartyl-tRNA(Asn) + L-glutamine + ATP + H2O = L-asparaginyl-tRNA(Asn) + L-glutamate + ADP + phosphate + 2 H(+). Functionally, allows the formation of correctly charged Asn-tRNA(Asn) or Gln-tRNA(Gln) through the transamidation of misacylated Asp-tRNA(Asn) or Glu-tRNA(Gln) in organisms which lack either or both of asparaginyl-tRNA or glutaminyl-tRNA synthetases. The reaction takes place in the presence of glutamine and ATP through an activated phospho-Asp-tRNA(Asn) or phospho-Glu-tRNA(Gln). This chain is Aspartyl/glutamyl-tRNA(Asn/Gln) amidotransferase subunit B, found in Treponema denticola (strain ATCC 35405 / DSM 14222 / CIP 103919 / JCM 8153 / KCTC 15104).